The chain runs to 71 residues: Conotoxin Bu25 (71 aa).

An N-terminal signal peptide occupies residues 1–21; it reads MGMRMMVTVFPLVVLATTVVS. Residues 22–44 constitute a propeptide that is removed on maturation; the sequence is LRSNRASDGRRGIVNKLNDLVPK. R70 carries the post-translational modification Arginine amide.

The protein belongs to the conotoxin A superfamily. Contains 3 disulfide bonds. They are not indicated here, since framework IV presents two different connectivities (I-V, II-III, IV-VI and I-III, II-V, IV-VI). As to expression, expressed by the venom duct.

It is found in the secreted. In Conus bullatus (Bubble cone), this protein is Conotoxin Bu25.